The following is a 234-amino-acid chain: MIDLWPAIDLINSTSVRLTEGKYDSKEKMEKSVEDSIRFYSQFKCVKRIHIVDLIGAKAKEVKEFDYIRSLRKLTTKPIEVGGGIRSKQTIENYIHSGIDYCIVGTKGIQDIEWLTHMTHQFPNKLYLSVDAFGEKIKINGWKEDAKLNLFDYVAKIEHLPLGGVIYTDISKDGKLSGPNFDLTGRLALYTSLPVIASGGIRHQEDLFRLESLNVHAAIVGKAAHLDEFWEGLS.

D9 functions as the Proton acceptor in the catalytic mechanism. D131 functions as the Proton donor in the catalytic mechanism.

It belongs to the HisA/HisF family.

It is found in the cytoplasm. It catalyses the reaction 1-(5-phospho-beta-D-ribosyl)-5-[(5-phospho-beta-D-ribosylamino)methylideneamino]imidazole-4-carboxamide = 5-[(5-phospho-1-deoxy-D-ribulos-1-ylimino)methylamino]-1-(5-phospho-beta-D-ribosyl)imidazole-4-carboxamide. The protein operates within amino-acid biosynthesis; L-histidine biosynthesis; L-histidine from 5-phospho-alpha-D-ribose 1-diphosphate: step 4/9. This Staphylococcus epidermidis (strain ATCC 35984 / DSM 28319 / BCRC 17069 / CCUG 31568 / BM 3577 / RP62A) protein is 1-(5-phosphoribosyl)-5-[(5-phosphoribosylamino)methylideneamino] imidazole-4-carboxamide isomerase.